Reading from the N-terminus, the 112-residue chain is DNA-directed RNA polymerases I and III subunit RPAC2 (112 aa).

This sequence belongs to the archaeal Rpo11/eukaryotic RPB11/RPC19 RNA polymerase subunit family. As to quaternary structure, component of the RNA polymerase I (Pol I) and RNA polymerase III (Pol III) complexes consisting of at least 13 and 17 subunits, respectively.

It localises to the nucleus. Functionally, DNA-dependent RNA polymerase catalyzes the transcription of DNA into RNA using the four ribonucleoside triphosphates as substrates. Common core component of RNA polymerases I and III which synthesize ribosomal RNA precursors and small RNAs, such as 5S rRNA and tRNAs, respectively. The polypeptide is DNA-directed RNA polymerases I and III subunit RPAC2 (polr1d) (Danio rerio (Zebrafish)).